We begin with the raw amino-acid sequence, 255 residues long: High-affinity branched-chain amino acid transport ATP-binding protein BraF (255 aa).

Residues 6–254 (LEVSGLTMRF…PDVIKAYLGE (249 aa)) form the ABC transporter domain. ATP is bound at residue 38 to 45 (GPNGAGKT).

Belongs to the ABC transporter superfamily.

Its subcellular location is the cell inner membrane. In terms of biological role, component of the high affinity leucine, isoleucine, valine, transport system (LIV-I), which is operative without Na(+) and is specific for alanine and threonine, in addition to branched-chain amino acids. The chain is High-affinity branched-chain amino acid transport ATP-binding protein BraF (braF) from Pseudomonas aeruginosa (strain ATCC 15692 / DSM 22644 / CIP 104116 / JCM 14847 / LMG 12228 / 1C / PRS 101 / PAO1).